Here is a 547-residue protein sequence, read N- to C-terminus: Chaperonin GroEL 1 (547 aa).

ATP is bound by residues 30–33 (TLGP), Lys51, 87–91 (DGTTT), Gly415, and Asp494. A disordered region spans residues 524-547 (PKGKAKGGGAGAGMPDYGGDDMDY).

Belongs to the chaperonin (HSP60) family. Forms a cylinder of 14 subunits composed of two heptameric rings stacked back-to-back. Interacts with the co-chaperonin GroES.

It localises to the cytoplasm. It carries out the reaction ATP + H2O + a folded polypeptide = ADP + phosphate + an unfolded polypeptide.. In terms of biological role, together with its co-chaperonin GroES, plays an essential role in assisting protein folding. The GroEL-GroES system forms a nano-cage that allows encapsulation of the non-native substrate proteins and provides a physical environment optimized to promote and accelerate protein folding. The polypeptide is Chaperonin GroEL 1 (Myxococcus xanthus (strain DK1622)).